A 189-amino-acid chain; its full sequence is MATDVFSSKNLAVQAQKKILGKMASSKYIATSLIDDTSGEVLDELYQLTREYTQSKKESEKVIKNLIKTVIKLAVLYRNNQFNEEEIALMEKFKRKVHQLAMTVVSFYQVEYTFDRNVLSKLLNECRELLHQVIQRHLTAKSHGRVNNVFDHFSNCEFLAALYNPFGPFKQHLQRLCEGVNKMLDEDNI.

Belongs to the TNFAIP8 family.

It localises to the cytoplasm. Functionally, acts as a negative mediator of apoptosis. The chain is Tumor necrosis factor alpha-induced protein 8 (tnfaip8) from Xenopus tropicalis (Western clawed frog).